The sequence spans 416 residues: Serine hydroxymethyltransferase (416 aa).

(6S)-5,6,7,8-tetrahydrofolate-binding positions include leucine 121 and 125 to 127; that span reads GHL. Lysine 229 carries the post-translational modification N6-(pyridoxal phosphate)lysine. (6S)-5,6,7,8-tetrahydrofolate contacts are provided by residues glutamate 245 and 354–356; that span reads SPF.

The protein belongs to the SHMT family. Homodimer. The cofactor is pyridoxal 5'-phosphate.

Its subcellular location is the cytoplasm. It carries out the reaction (6R)-5,10-methylene-5,6,7,8-tetrahydrofolate + glycine + H2O = (6S)-5,6,7,8-tetrahydrofolate + L-serine. The protein operates within one-carbon metabolism; tetrahydrofolate interconversion. It participates in amino-acid biosynthesis; glycine biosynthesis; glycine from L-serine: step 1/1. Its function is as follows. Catalyzes the reversible interconversion of serine and glycine with tetrahydrofolate (THF) serving as the one-carbon carrier. This reaction serves as the major source of one-carbon groups required for the biosynthesis of purines, thymidylate, methionine, and other important biomolecules. Also exhibits THF-independent aldolase activity toward beta-hydroxyamino acids, producing glycine and aldehydes, via a retro-aldol mechanism. The chain is Serine hydroxymethyltransferase from Aliivibrio salmonicida (strain LFI1238) (Vibrio salmonicida (strain LFI1238)).